The chain runs to 199 residues: MGSVKSSNPALEGLHEELGVMEEQIRSIIESFIELGVSVYDFPGTPEASQGMVTNLKRNVDRIFKLNQTSNDPQSALKDVNVPLEVVQYIEDGRNPDIYTREFVEAIRRSNQYQRAKMHGMGMLRDSLAEKIKEQFPELKDDVENIVQRTNMKPTGQARVNSGTTNMTTTAEQSNVVNATAGDVGTNANTTESVEQNGI.

The protein belongs to the Mediator complex subunit 10 family. Component of the Mediator complex.

Its subcellular location is the nucleus. Its function is as follows. Component of the Mediator complex, a coactivator involved in the regulated transcription of nearly all RNA polymerase II-dependent genes. Mediator functions as a bridge to convey information from gene-specific regulatory proteins to the basal RNA polymerase II transcription machinery. Mediator is recruited to promoters by direct interactions with regulatory proteins and serves as a scaffold for the assembly of a functional preinitiation complex with RNA polymerase II and the general transcription factors. The chain is Mediator of RNA polymerase II transcription subunit 10 (NUT2) from Candida glabrata (strain ATCC 2001 / BCRC 20586 / JCM 3761 / NBRC 0622 / NRRL Y-65 / CBS 138) (Yeast).